Consider the following 551-residue polypeptide: Formate--tetrahydrofolate ligase (551 aa).

Residue 65-72 coordinates ATP; sequence TPAGEGKT.

Belongs to the formate--tetrahydrofolate ligase family.

It catalyses the reaction (6S)-5,6,7,8-tetrahydrofolate + formate + ATP = (6R)-10-formyltetrahydrofolate + ADP + phosphate. The protein operates within one-carbon metabolism; tetrahydrofolate interconversion. The chain is Formate--tetrahydrofolate ligase from Thermosipho melanesiensis (strain DSM 12029 / CIP 104789 / BI429).